A 585-amino-acid polypeptide reads, in one-letter code: tRNA-guanine(15) transglycosylase (585 aa).

Asp-95 functions as the Nucleophile in the catalytic mechanism. The substrate site is built by Asp-130 and Ala-196. 3 residues coordinate Zn(2+): Cys-279, Cys-281, and Cys-284. A PUA domain is found at 507 to 582 (VMRVVVNKEA…RAVKTRRGVE (76 aa)).

This sequence belongs to the archaeosine tRNA-ribosyltransferase family. Requires Zn(2+) as cofactor.

It carries out the reaction guanosine(15) in tRNA + 7-cyano-7-deazaguanine = 7-cyano-7-carbaguanosine(15) in tRNA + guanine. It functions in the pathway tRNA modification; archaeosine-tRNA biosynthesis. Exchanges the guanine residue with 7-cyano-7-deazaguanine (preQ0) at position 15 in the dihydrouridine loop (D-loop) of archaeal tRNAs. This Pyrococcus furiosus (strain ATCC 43587 / DSM 3638 / JCM 8422 / Vc1) protein is tRNA-guanine(15) transglycosylase.